The following is a 108-amino-acid chain: Competence protein ComGC (108 aa).

Residues 1–13 (MKKMMTFLKKAKV) form the signal peptide. The segment at 14–39 (KAFTLVEMLVVLLIISVLFLLFVPNL) is may be involved in polymerization of ComGC. Position 16 is an N-methylphenylalanine (Phe16). The helical transmembrane segment at 16–36 (FTLVEMLVVLLIISVLFLLFV) threads the bilayer.

It belongs to the ComGC family. In terms of assembly, the transformation pili are flexible filaments, consisting mainly of the major pilin ComGC and smaller amounts of the minor pilins, including at least ComGD, ComGF and ComGG, and perhaps ComGE. Homodimer. Forms higher-order multimers. Interacts with ComGG; the interaction is probably direct. In terms of processing, undergoes proteolytic cleavage.

The protein resides in the cell membrane. It is found in the cell surface. It localises to the fimbrium. Its subcellular location is the secreted. In terms of biological role, major component of the type IV-like pilus (T4P) that plays a role in transformation. Transformation pili are dynamically extended and retracted, perhaps thereby promoting DNA uptake and transformation. Required for transformation. Required for DNA binding. In Streptococcus pneumoniae serotype 4 (strain ATCC BAA-334 / TIGR4), this protein is Competence protein ComGC.